We begin with the raw amino-acid sequence, 968 residues long: Alanine--tRNA ligase, cytoplasmic (968 aa).

ATP contacts are provided by residues arginine 77, histidine 95, tryptophan 176, and 214–216 (IWN). The L-alanine site is built by asparagine 216 and aspartate 239. Residue glycine 243 participates in ATP binding. 4 residues coordinate Zn(2+): histidine 606, histidine 610, cysteine 724, and histidine 728.

It belongs to the class-II aminoacyl-tRNA synthetase family. Monomer. Zn(2+) is required as a cofactor.

The protein localises to the cytoplasm. It catalyses the reaction tRNA(Ala) + L-alanine + ATP = L-alanyl-tRNA(Ala) + AMP + diphosphate. In terms of biological role, catalyzes the attachment of alanine to tRNA(Ala) in a two-step reaction: alanine is first activated by ATP to form Ala-AMP and then transferred to the acceptor end of tRNA(Ala). Also edits incorrectly charged tRNA(Ala) via its editing domain. This Caenorhabditis elegans protein is Alanine--tRNA ligase, cytoplasmic.